The primary structure comprises 732 residues: Catalase-peroxidase (732 aa).

Residues 1 to 21 form a disordered region; the sequence is MSMAEMRCPFSGHGAATTPAS. The signal sequence occupies residues 1–22; sequence MSMAEMRCPFSGHGAATTPASA. The tryptophyl-tyrosyl-methioninium (Trp-Tyr) (with M-246) cross-link spans 97-220; that stretch reads WHSAGTYRLA…LAATEMGLIY (124 aa). Histidine 98 (proton acceptor) is an active-site residue. The tryptophyl-tyrosyl-methioninium (Tyr-Met) (with W-97) cross-link spans 220–246; sequence YVNPEGPHGEPDPVASGREVRDTFARM. Histidine 261 is a binding site for heme b.

Belongs to the peroxidase family. Peroxidase/catalase subfamily. Homodimer or homotetramer. Requires heme b as cofactor. Post-translationally, formation of the three residue Trp-Tyr-Met cross-link is important for the catalase, but not the peroxidase activity of the enzyme.

It carries out the reaction H2O2 + AH2 = A + 2 H2O. The enzyme catalyses 2 H2O2 = O2 + 2 H2O. Its function is as follows. Bifunctional enzyme with both catalase and broad-spectrum peroxidase activity. This is Catalase-peroxidase from Synechococcus sp. (strain RCC307).